The following is a 117-amino-acid chain: Large ribosomal subunit protein uL22 (117 aa).

This sequence belongs to the universal ribosomal protein uL22 family. In terms of assembly, part of the 50S ribosomal subunit.

In terms of biological role, this protein binds specifically to 23S rRNA; its binding is stimulated by other ribosomal proteins, e.g. L4, L17, and L20. It is important during the early stages of 50S assembly. It makes multiple contacts with different domains of the 23S rRNA in the assembled 50S subunit and ribosome. Its function is as follows. The globular domain of the protein is located near the polypeptide exit tunnel on the outside of the subunit, while an extended beta-hairpin is found that lines the wall of the exit tunnel in the center of the 70S ribosome. In Lactobacillus delbrueckii subsp. bulgaricus (strain ATCC 11842 / DSM 20081 / BCRC 10696 / JCM 1002 / NBRC 13953 / NCIMB 11778 / NCTC 12712 / WDCM 00102 / Lb 14), this protein is Large ribosomal subunit protein uL22.